The following is a 108-amino-acid chain: Phosphoribosyl-ATP pyrophosphatase (108 aa).

This sequence belongs to the PRA-PH family.

Its subcellular location is the cytoplasm. The catalysed reaction is 1-(5-phospho-beta-D-ribosyl)-ATP + H2O = 1-(5-phospho-beta-D-ribosyl)-5'-AMP + diphosphate + H(+). Its pathway is amino-acid biosynthesis; L-histidine biosynthesis; L-histidine from 5-phospho-alpha-D-ribose 1-diphosphate: step 2/9. In Trichlorobacter lovleyi (strain ATCC BAA-1151 / DSM 17278 / SZ) (Geobacter lovleyi), this protein is Phosphoribosyl-ATP pyrophosphatase.